A 238-amino-acid polypeptide reads, in one-letter code: NAD(P)H-hydrate epimerase (238 aa).

Positions 11-217 (AAALDKDLMS…EIHQKYNLQL (207 aa)) constitute a YjeF N-terminal domain. (6S)-NADPHX is bound at residue 61–65 (NNGGD). Residues Asn62 and Asp123 each coordinate K(+). Residues 127–133 (GFSFTGS) and Asp156 contribute to the (6S)-NADPHX site. Ser159 serves as a coordination point for K(+).

Belongs to the NnrE/AIBP family. K(+) serves as cofactor.

The protein localises to the cytoplasm. It localises to the mitochondrion. It carries out the reaction (6R)-NADHX = (6S)-NADHX. The catalysed reaction is (6R)-NADPHX = (6S)-NADPHX. In terms of biological role, catalyzes the epimerization of the S- and R-forms of NAD(P)HX, a damaged form of NAD(P)H that is a result of enzymatic or heat-dependent hydration. This is a prerequisite for the S-specific NAD(P)H-hydrate dehydratase to allow the repair of both epimers of NAD(P)HX. The polypeptide is NAD(P)H-hydrate epimerase (Sclerotinia sclerotiorum (strain ATCC 18683 / 1980 / Ss-1) (White mold)).